A 424-amino-acid polypeptide reads, in one-letter code: Enolase (424 aa).

Position 162 (Q162) interacts with (2R)-2-phosphoglycerate. Residue E204 is the Proton donor of the active site. Residues D241, E284, and D311 each contribute to the Mg(2+) site. (2R)-2-phosphoglycerate contacts are provided by K336, R365, S366, and K387. K336 serves as the catalytic Proton acceptor.

Belongs to the enolase family. The cofactor is Mg(2+).

Its subcellular location is the cytoplasm. It localises to the secreted. The protein localises to the cell surface. It catalyses the reaction (2R)-2-phosphoglycerate = phosphoenolpyruvate + H2O. The protein operates within carbohydrate degradation; glycolysis; pyruvate from D-glyceraldehyde 3-phosphate: step 4/5. Catalyzes the reversible conversion of 2-phosphoglycerate (2-PG) into phosphoenolpyruvate (PEP). It is essential for the degradation of carbohydrates via glycolysis. The polypeptide is Enolase (Agrobacterium fabrum (strain C58 / ATCC 33970) (Agrobacterium tumefaciens (strain C58))).